Consider the following 145-residue polypeptide: Large-conductance mechanosensitive channel (145 aa).

The next 3 membrane-spanning stretches (helical) occupy residues 10-30 (FALKGNVMDLAVGVIIGGAFA), 41-61 (IMPIVAFIAGGEINFKNMFLI), and 87-107 (GNFITVLINFLILAFIIFMMV).

It belongs to the MscL family. As to quaternary structure, homopentamer.

Its subcellular location is the cell inner membrane. Channel that opens in response to stretch forces in the membrane lipid bilayer. May participate in the regulation of osmotic pressure changes within the cell. The sequence is that of Large-conductance mechanosensitive channel from Psychrobacter arcticus (strain DSM 17307 / VKM B-2377 / 273-4).